Consider the following 141-residue polypeptide: Large ribosomal subunit protein uL11 (141 aa).

It belongs to the universal ribosomal protein uL11 family. In terms of assembly, part of the ribosomal stalk of the 50S ribosomal subunit. Interacts with L10 and the large rRNA to form the base of the stalk. L10 forms an elongated spine to which L12 dimers bind in a sequential fashion forming a multimeric L10(L12)X complex. One or more lysine residues are methylated.

Its function is as follows. Forms part of the ribosomal stalk which helps the ribosome interact with GTP-bound translation factors. This is Large ribosomal subunit protein uL11 from Oceanobacillus iheyensis (strain DSM 14371 / CIP 107618 / JCM 11309 / KCTC 3954 / HTE831).